A 213-amino-acid chain; its full sequence is Putative glutathione-dependent formaldehyde-activating enzyme (213 aa).

One can recognise a CENP-V/GFA domain in the interval 19–165; that stretch reads FPGGTLKCLC…FRELGLETYD (147 aa). Zn(2+) is bound by residues cysteine 26, cysteine 28, cysteine 47, cysteine 49, cysteine 52, cysteine 94, and cysteine 97.

The protein belongs to the Gfa family. Requires Zn(2+) as cofactor.

It catalyses the reaction S-(hydroxymethyl)glutathione = glutathione + formaldehyde. It functions in the pathway one-carbon metabolism; formaldehyde degradation; formate from formaldehyde (glutathione route): step 1/3. In terms of biological role, catalyzes the condensation of formaldehyde and glutathione to S-hydroxymethylglutathione. This chain is Putative glutathione-dependent formaldehyde-activating enzyme, found in Podospora anserina (strain S / ATCC MYA-4624 / DSM 980 / FGSC 10383) (Pleurage anserina).